Consider the following 228-residue polypeptide: 2,3-bisphosphoglycerate-dependent phosphoglycerate mutase (228 aa).

Substrate is bound by residues Arg-8–Asn-15, Thr-21–Gly-22, Arg-60, Glu-87–Tyr-90, Lys-98, Arg-114–Arg-115, and Gly-183–Asn-184. The Tele-phosphohistidine intermediate role is filled by His-9. Glu-87 acts as the Proton donor/acceptor in catalysis.

It belongs to the phosphoglycerate mutase family. BPG-dependent PGAM subfamily.

The catalysed reaction is (2R)-2-phosphoglycerate = (2R)-3-phosphoglycerate. It functions in the pathway carbohydrate degradation; glycolysis; pyruvate from D-glyceraldehyde 3-phosphate: step 3/5. Functionally, catalyzes the interconversion of 2-phosphoglycerate and 3-phosphoglycerate. This is 2,3-bisphosphoglycerate-dependent phosphoglycerate mutase from Staphylococcus aureus (strain Mu3 / ATCC 700698).